The following is a 1295-amino-acid chain: Phosphoribosylformylglycinamidine synthase (1295 aa).

Positions 305–327 are disordered; it reads WPGAATGSGGEIRDEGATGRGAK. Residues 307 to 318 and Ala678 each bind ATP; that span reads GAATGSGGEIRD. Mg(2+) contacts are provided by Glu718, Asn722, and Asp884. Ser886 provides a ligand contact to ATP. In terms of domain architecture, Glutamine amidotransferase type-1 spans 1042–1295; sequence VAVLREQGVN…IFRNARKQLG (254 aa). The active-site Nucleophile is Cys1135. Residues His1260 and Glu1262 contribute to the active site.

The protein in the N-terminal section; belongs to the FGAMS family. Monomer.

It is found in the cytoplasm. It carries out the reaction N(2)-formyl-N(1)-(5-phospho-beta-D-ribosyl)glycinamide + L-glutamine + ATP + H2O = 2-formamido-N(1)-(5-O-phospho-beta-D-ribosyl)acetamidine + L-glutamate + ADP + phosphate + H(+). The protein operates within purine metabolism; IMP biosynthesis via de novo pathway; 5-amino-1-(5-phospho-D-ribosyl)imidazole from N(2)-formyl-N(1)-(5-phospho-D-ribosyl)glycinamide: step 1/2. Functionally, phosphoribosylformylglycinamidine synthase involved in the purines biosynthetic pathway. Catalyzes the ATP-dependent conversion of formylglycinamide ribonucleotide (FGAR) and glutamine to yield formylglycinamidine ribonucleotide (FGAM) and glutamate. The polypeptide is Phosphoribosylformylglycinamidine synthase (Shigella boydii serotype 4 (strain Sb227)).